We begin with the raw amino-acid sequence, 150 residues long: Cilia- and flagella-associated protein 68 (150 aa).

Mn regions lie at residues 99-110 and 140-150; these read TTYDTSYNNKMP and KSTYMNSYSKP.

This sequence belongs to the CFAP68 family. Microtubule inner protein component of sperm flagellar doublet microtubules.

Its subcellular location is the cytoplasm. The protein localises to the cytoskeleton. It is found in the cilium axoneme. It localises to the flagellum axoneme. The protein resides in the nucleus. Its subcellular location is the cell projection. The protein localises to the cilium. In terms of biological role, microtubule inner protein (MIP) part of the dynein-decorated doublet microtubules (DMTs) in cilia axoneme, which is required for motile cilia beating. The sequence is that of Cilia- and flagella-associated protein 68 from Homo sapiens (Human).